Consider the following 224-residue polypeptide: Propanediol dehydratase medium subunit (224 aa).

The segment at methionine 1–glutamate 18 is targets protein to the BMC.

Belongs to the diol/glycerol dehydratase medium subunit family. In terms of assembly, the propanediol dehydratase enzyme is a heterotrimeric complex composed of a large (PduC), a medium (PduD) and a small (PduE) subunit. Adenosylcob(III)alamin serves as cofactor.

The protein localises to the bacterial microcompartment. The enzyme catalyses propane-1,2-diol = propanal + H2O. The protein operates within polyol metabolism; 1,2-propanediol degradation. Part of the PduCDE complex that catalyzes the dehydration of 1,2-propanediol (1,2-PD) to propionaldehyde. This subunit is directly targeted to the bacterial microcompartment (BMC). Functionally, expression of a cosmid containing the full 21-gene pdu operon in E.coli allows E.coli to grow on 1,2-propanediol (1,2-PD) with the appearance of BMCs in its cytoplasm. In terms of biological role, the 1,2-PD-specific bacterial microcompartment (BMC) concentrates low levels of 1,2-PD catabolic enzymes, concentrates volatile reaction intermediates thus enhancing pathway flux and keeps the level of toxic, mutagenic propionaldehyde low. The polypeptide is Propanediol dehydratase medium subunit (Citrobacter freundii).